The sequence spans 450 residues: Tubulin alpha-2 chain (450 aa).

Residues Q11, E71, G144, T145, T179, N206, and N228 each coordinate GTP. Mg(2+) is bound at residue E71. Residue E254 is part of the active site. At T349 the chain carries Phosphothreonine. The tract at residues 430–450 (KDYEEVGAEGGDDEDDEGEEY) is disordered. Acidic residues predominate over residues 431–450 (DYEEVGAEGGDDEDDEGEEY).

It belongs to the tubulin family. In terms of assembly, dimer of alpha and beta chains. A typical microtubule is a hollow water-filled tube with an outer diameter of 25 nm and an inner diameter of 15 nM. Alpha-beta heterodimers associate head-to-tail to form protofilaments running lengthwise along the microtubule wall with the beta-tubulin subunit facing the microtubule plus end conferring a structural polarity. Microtubules usually have 13 protofilaments but different protofilament numbers can be found in some organisms and specialized cells. Mg(2+) serves as cofactor. In terms of processing, undergoes a tyrosination/detyrosination cycle, the cyclic removal and re-addition of a C-terminal tyrosine residue by the enzymes tubulin tyrosine carboxypeptidase (TTCP) and tubulin tyrosine ligase (TTL), respectively. Post-translationally, acetylation of alpha chains at Lys-40 stabilizes microtubules and affects affinity and processivity of microtubule motors. This modification has a role in multiple cellular functions, ranging from cell motility, cell cycle progression or cell differentiation to intracellular trafficking and signaling.

It localises to the cytoplasm. The protein resides in the cytoskeleton. It carries out the reaction GTP + H2O = GDP + phosphate + H(+). In terms of biological role, tubulin is the major constituent of microtubules, a cylinder consisting of laterally associated linear protofilaments composed of alpha- and beta-tubulin heterodimers. Microtubules grow by the addition of GTP-tubulin dimers to the microtubule end, where a stabilizing cap forms. Below the cap, tubulin dimers are in GDP-bound state, owing to GTPase activity of alpha-tubulin. This Arabidopsis thaliana (Mouse-ear cress) protein is Tubulin alpha-2 chain (TUBA2).